A 331-amino-acid polypeptide reads, in one-letter code: Uroporphyrinogen decarboxylase (331 aa).

Residues 22–26, aspartate 71, tyrosine 145, serine 199, and histidine 308 each bind substrate; that span reads RQAGR.

The protein belongs to the uroporphyrinogen decarboxylase family. In terms of assembly, homodimer.

The protein localises to the cytoplasm. It catalyses the reaction uroporphyrinogen III + 4 H(+) = coproporphyrinogen III + 4 CO2. The protein operates within porphyrin-containing compound metabolism; protoporphyrin-IX biosynthesis; coproporphyrinogen-III from 5-aminolevulinate: step 4/4. Functionally, catalyzes the decarboxylation of four acetate groups of uroporphyrinogen-III to yield coproporphyrinogen-III. The sequence is that of Uroporphyrinogen decarboxylase from Picrophilus torridus (strain ATCC 700027 / DSM 9790 / JCM 10055 / NBRC 100828 / KAW 2/3).